A 551-amino-acid polypeptide reads, in one-letter code: MDARTHRRAAGTPRALAERAGRRCCLGWDFSTQQVKVVAVDAELNVFYEDSVHFDRDLPEFGTQGGVHVHKDRLTVTSPVLMWVQALDLILGKMKSSGFDFSQVLALSGAGQQHGSVYWKTGASLALSSLSPALPLHQQLQSCFSISDCPIWMDSSTTAQCHQLEAAVGGAQALSCLTGSRAYERFTGNQIAKLFQKNPEAYSHSERISLVSSFAASLFLGGYSPIDYSDGSGMNLLQIQEKVWSQACLDVCAPHLEEKLGSPVPSCSVVGTISSYYVQRYGFPPGCKVVAFSGDNPASLAGMRLEEGDIAVSLGTSDTLFLWLQKPMPALEGHIFCNPVDPQHYMALLCFKNGSLMREKIRDESASCSWNKFSKALKSTAMGNNGNLGFYFDVMEITPEIIGRHRFNAENMEVSAFPGDVEIRALIEGQFMAKRIHAEGLGYRVMPKTKILATGGASHNKDILQVLADVFGAPVYVIDTTSSACVGSAYRAFHGLAGGTGVAFSEVVKSAPQPSLAATPNPGASQVYAALLPRYSALEQRILSTAQRPLE.

Residues histidine 114, arginine 185, aspartate 295, and asparagine 296 each coordinate substrate. Residues tryptophan 370, 456 to 457 (GA), and asparagine 460 each bind ATP.

This sequence belongs to the FGGY kinase family. In terms of assembly, monomer.

It catalyses the reaction D-xylulose + ATP = D-xylulose 5-phosphate + ADP + H(+). Functionally, phosphorylates D-xylulose to produce D-xylulose 5-phosphate, a molecule that may play an important role in the regulation of glucose metabolism and lipogenesis. This Mus musculus (Mouse) protein is Xylulose kinase (Xylb).